The primary structure comprises 212 residues: Uridine kinase (212 aa).

An ATP-binding site is contributed by 13–20 (GGSGSGKT).

This sequence belongs to the uridine kinase family.

The protein resides in the cytoplasm. The enzyme catalyses uridine + ATP = UMP + ADP + H(+). The catalysed reaction is cytidine + ATP = CMP + ADP + H(+). Its pathway is pyrimidine metabolism; CTP biosynthesis via salvage pathway; CTP from cytidine: step 1/3. The protein operates within pyrimidine metabolism; UMP biosynthesis via salvage pathway; UMP from uridine: step 1/1. In Bacillus anthracis (strain A0248), this protein is Uridine kinase.